The sequence spans 412 residues: Multifunctional CCA protein (412 aa).

The ATP site is built by glycine 8 and arginine 11. Residues glycine 8 and arginine 11 each contribute to the CTP site. 2 residues coordinate Mg(2+): aspartate 21 and aspartate 23. Positions 91, 137, and 140 each coordinate ATP. Residues arginine 91, arginine 137, and arginine 140 each coordinate CTP. Positions 226–327 constitute an HD domain; that stretch reads TGEHVLMVVE…VKVLERCDAL (102 aa).

It belongs to the tRNA nucleotidyltransferase/poly(A) polymerase family. Bacterial CCA-adding enzyme type 1 subfamily. As to quaternary structure, monomer. Can also form homodimers and oligomers. Requires Mg(2+) as cofactor. Ni(2+) is required as a cofactor.

The enzyme catalyses a tRNA precursor + 2 CTP + ATP = a tRNA with a 3' CCA end + 3 diphosphate. It carries out the reaction a tRNA with a 3' CCA end + 2 CTP + ATP = a tRNA with a 3' CCACCA end + 3 diphosphate. Its function is as follows. Catalyzes the addition and repair of the essential 3'-terminal CCA sequence in tRNAs without using a nucleic acid template. Adds these three nucleotides in the order of C, C, and A to the tRNA nucleotide-73, using CTP and ATP as substrates and producing inorganic pyrophosphate. tRNA 3'-terminal CCA addition is required both for tRNA processing and repair. Also involved in tRNA surveillance by mediating tandem CCA addition to generate a CCACCA at the 3' terminus of unstable tRNAs. While stable tRNAs receive only 3'-terminal CCA, unstable tRNAs are marked with CCACCA and rapidly degraded. This is Multifunctional CCA protein from Azoarcus sp. (strain BH72).